A 449-amino-acid chain; its full sequence is MITIKKGLDLPIAGTPAQVIHNGNTVNEVATLGEEYVGMRPSMKVREGDVVKKGQVLFEDKKNPGVVFTAPASGTVVTINRGEKRVLQSVVIKVEGDEQITFTRYEAAQLASLSAEQVKQNLIESGLWTAFRTRPFSKVPALDAIPSSIFVNAMDTNPLAADPEVVLKEYETDFKDGLTVLTRLFNGQKPVYLCKDADSNIPLSPAIEGITIKSFSGVHPAGLVGTHIHFVDPVGATKQVWHLNYQDVIAIGKLFTTGELFTDRIISLAGPQVKNPRLVRTRLGANLSQLTANELNAGENRVISGSVLSGATAAGPVDYLGRYALQVSVLAEGREKELFGWIMPGSDKFSITRTVLGHFGKKLFNFTTAVHGGERAMVPIGAYERVMPLDIIPTLLLRDLAAGDTDSAQNLGCLELDEEDLALCTYVCPGKNNYGPMLRAALEKIEKEG.

The protein belongs to the NqrA family. In terms of assembly, composed of six subunits; NqrA, NqrB, NqrC, NqrD, NqrE and NqrF.

The catalysed reaction is a ubiquinone + n Na(+)(in) + NADH + H(+) = a ubiquinol + n Na(+)(out) + NAD(+). Its function is as follows. NQR complex catalyzes the reduction of ubiquinone-1 to ubiquinol by two successive reactions, coupled with the transport of Na(+) ions from the cytoplasm to the periplasm. NqrA to NqrE are probably involved in the second step, the conversion of ubisemiquinone to ubiquinol. This chain is Na(+)-translocating NADH-quinone reductase subunit A, found in Actinobacillus pleuropneumoniae serotype 3 (strain JL03).